The primary structure comprises 1122 residues: Angiopoietin-1 receptor (1122 aa).

An N-terminal signal peptide occupies residues 1–22 (MDSLAGLVLCGVSLLLYGVVEG). At 23–746 (AMDLILINSL…SADLGGGKML (724 aa)) the chain is on the extracellular side. Residues cysteine 44 and cysteine 102 are joined by a disulfide bond. Residues 44–123 (CIASGWHPHE…RTMKMRQQAS (80 aa)) form the Ig-like C2-type 1 domain. Asparagine 140 and asparagine 158 each carry an N-linked (GlcNAc...) asparagine glycan. 3 consecutive EGF-like domains span residues 210 to 252 (RCEA…RTCE), 254 to 299 (ACEP…LQCN), and 301 to 341 (ACPS…LQCE). Disulfide bonds link cysteine 211–cysteine 220, cysteine 224–cysteine 233, cysteine 227–cysteine 240, cysteine 242–cysteine 251, cysteine 255–cysteine 264, cysteine 268–cysteine 274, cysteine 280–cysteine 287, cysteine 289–cysteine 298, cysteine 302–cysteine 311, cysteine 315–cysteine 323, cysteine 317–cysteine 329, cysteine 331–cysteine 340, and cysteine 370–cysteine 424. Residues 350 to 440 (PQIEDLPDHI…GMVEKPFNIS (91 aa)) enclose the Ig-like C2-type 2 domain. 7 N-linked (GlcNAc...) asparagine glycosylation sites follow: asparagine 399, asparagine 438, asparagine 464, asparagine 558, asparagine 595, asparagine 648, and asparagine 690. Fibronectin type-III domains follow at residues 444–539 (LPEP…TASI), 543–635 (PPRG…TLSD), and 640–733 (QPEN…TLPH). The helical transmembrane segment at 747 to 767 (LIAILGSAGMTCITVLLAFLI) threads the bilayer. At 768–1122 (MLQLKRANVQ…GIDCSAEEAA (355 aa)) the chain is on the cytoplasmic side. The 273-residue stretch at 822–1094 (IKFQDVIGEG…QILVSLNRML (273 aa)) folds into the Protein kinase domain. Residues 828–836 (IGEGNFGQV) and lysine 853 contribute to the ATP site. Tyrosine 858 is modified (phosphotyrosine; by autocatalysis). Aspartate 962 acts as the Proton acceptor in catalysis. Residues tyrosine 990, tyrosine 1100, and tyrosine 1106 each carry the phosphotyrosine; by autocatalysis modification.

Belongs to the protein kinase superfamily. Tyr protein kinase family. Tie subfamily. Homodimer. Heterodimer with TIE1. Interacts with ANGPT1, ANGPT2 and ANGPT4. At cell-cell contacts in quiescent cells, forms a signaling complex composed of ANGPT1 plus TEK molecules from two adjoining cells. In the absence of endothelial cell-cell contacts, interaction with ANGPT1 mediates contacts with the extracellular matrix. Interacts (tyrosine phosphorylated) with TNIP2. Interacts (tyrosine phosphorylated) with SHC1 (via SH2 domain). Interacts with PTPRB; this promotes endothelial cell-cell adhesion. Interacts with DOK2, GRB2, GRB7, GRB14, PIK3R1 and PTPN11/SHP2. Colocalizes with DOK2 at contacts with the extracellular matrix in migrating cells. Proteolytic processing leads to the shedding of the extracellular domain (soluble TIE-2 alias sTIE-2). Post-translationally, autophosphorylated on tyrosine residues in response to ligand binding. Autophosphorylation occurs in trans, i.e. one subunit of the dimeric receptor phosphorylates tyrosine residues on the other subunit. Autophosphorylation occurs in a sequential manner, where Tyr-990 in the kinase activation loop is phosphorylated first, followed by autophosphorylation at Tyr-1106 and at additional tyrosine residues. ANGPT1-induced phosphorylation is impaired during hypoxia, due to increased expression of ANGPT2. Phosphorylation is important for interaction with GRB14, PIK3R1 and PTPN11. Phosphorylation at Tyr-1100 is important for interaction with GRB2 and GRB7. Phosphorylation at Tyr-1106 is important for interaction with DOK2 and for coupling to downstream signal transduction pathways in endothelial cells. Dephosphorylated by PTPRB. In terms of processing, ubiquitinated. The phosphorylated receptor is ubiquitinated and internalized, leading to its degradation. As to expression, specifically expressed in developing vascular endothelial cells. Abundantly expressed in lung and heart, moderately in brain, liver and kidney, and weakly in thymus, spleen and testis.

It is found in the cell membrane. Its subcellular location is the cell junction. The protein localises to the focal adhesion. The protein resides in the cytoplasm. It localises to the cytoskeleton. It is found in the secreted. It carries out the reaction L-tyrosyl-[protein] + ATP = O-phospho-L-tyrosyl-[protein] + ADP + H(+). Its activity is regulated as follows. Angiopoietin binding leads to receptor dimerization and activation by autophosphorylation at Tyr-990 on the kinase activation loop. In terms of biological role, tyrosine-protein kinase that acts as a cell-surface receptor for ANGPT1, ANGPT2 and ANGPT4 and regulates angiogenesis, endothelial cell survival, proliferation, migration, adhesion and cell spreading, reorganization of the actin cytoskeleton, but also maintenance of vascular quiescence. Has anti-inflammatory effects by preventing the leakage of pro-inflammatory plasma proteins and leukocytes from blood vessels. Required for normal angiogenesis and heart development during embryogenesis. Required for postnatal hematopoiesis. After birth, activates or inhibits angiogenesis, depending on the context. Inhibits angiogenesis and promotes vascular stability in quiescent vessels, where endothelial cells have tight contacts. In quiescent vessels, ANGPT1 oligomers recruit TEK to cell-cell contacts, forming complexes with TEK molecules from adjoining cells, and this leads to preferential activation of phosphatidylinositol 3-kinase and the AKT1 signaling cascades. In migrating endothelial cells that lack cell-cell adhesions, ANGT1 recruits TEK to contacts with the extracellular matrix, leading to the formation of focal adhesion complexes, activation of PTK2/FAK and of the downstream kinases MAPK1/ERK2 and MAPK3/ERK1, and ultimately to the stimulation of sprouting angiogenesis. ANGPT1 signaling triggers receptor dimerization and autophosphorylation at specific tyrosine residues that then serve as binding sites for scaffold proteins and effectors. Signaling is modulated by ANGPT2 that has lower affinity for TEK, can promote TEK autophosphorylation in the absence of ANGPT1, but inhibits ANGPT1-mediated signaling by competing for the same binding site. Signaling is also modulated by formation of heterodimers with TIE1, and by proteolytic processing that gives rise to a soluble TEK extracellular domain. The soluble extracellular domain modulates signaling by functioning as decoy receptor for angiopoietins. TEK phosphorylates DOK2, GRB7, GRB14, PIK3R1, SHC1 and TIE1. This Mus musculus (Mouse) protein is Angiopoietin-1 receptor (Tek).